The following is a 92-amino-acid chain: Small ribosomal subunit protein uS17 (92 aa).

Belongs to the universal ribosomal protein uS17 family. Part of the 30S ribosomal subunit.

In terms of biological role, one of the primary rRNA binding proteins, it binds specifically to the 5'-end of 16S ribosomal RNA. This Corynebacterium diphtheriae (strain ATCC 700971 / NCTC 13129 / Biotype gravis) protein is Small ribosomal subunit protein uS17.